The sequence spans 584 residues: A-type ATP synthase subunit A (584 aa).

234-241 contributes to the ATP binding site; it reads GPFGSGKT.

The protein belongs to the ATPase alpha/beta chains family. Has multiple subunits with at least A(3), B(3), C, D, E, F, H, I and proteolipid K(x).

The protein localises to the cell membrane. The catalysed reaction is ATP + H2O + 4 H(+)(in) = ADP + phosphate + 5 H(+)(out). Functionally, component of the A-type ATP synthase that produces ATP from ADP in the presence of a proton gradient across the membrane. The A chain is the catalytic subunit. This Methanoculleus marisnigri (strain ATCC 35101 / DSM 1498 / JR1) protein is A-type ATP synthase subunit A.